We begin with the raw amino-acid sequence, 227 residues long: Cytochrome c oxidase subunit 2 (227 aa).

An N-formylmethionine modification is found at Met1. The Mitochondrial intermembrane segment spans residues 1–14; the sequence is MAYPMQLGFQDATS. Residues 15 to 45 traverse the membrane as a helical segment; it reads PIMEELLHFHDHTLMIVFLISSLVLYIISLM. At 46–59 the chain is on the mitochondrial matrix side; that stretch reads LTTKLTHTSTMDAQ. The helical transmembrane segment at 60–87 threads the bilayer; the sequence is EVETIWTILPAIILILIALPSLRILYMM. Topologically, residues 88-227 are mitochondrial intermembrane; that stretch reads DEINNPSLTV…YFEKWSASML (140 aa). Residues His161, Cys196, Glu198, Cys200, His204, and Met207 each contribute to the Cu cation site. Residue Glu198 participates in Mg(2+) binding. Tyr218 is subject to Phosphotyrosine.

It belongs to the cytochrome c oxidase subunit 2 family. Component of the cytochrome c oxidase (complex IV, CIV), a multisubunit enzyme composed of 14 subunits. The complex is composed of a catalytic core of 3 subunits MT-CO1, MT-CO2 and MT-CO3, encoded in the mitochondrial DNA, and 11 supernumerary subunits COX4I, COX5A, COX5B, COX6A, COX6B, COX6C, COX7A, COX7B, COX7C, COX8 and NDUFA4, which are encoded in the nuclear genome. The complex exists as a monomer or a dimer and forms supercomplexes (SCs) in the inner mitochondrial membrane with NADH-ubiquinone oxidoreductase (complex I, CI) and ubiquinol-cytochrome c oxidoreductase (cytochrome b-c1 complex, complex III, CIII), resulting in different assemblies (supercomplex SCI(1)III(2)IV(1) and megacomplex MCI(2)III(2)IV(2)). Found in a complex with TMEM177, COA6, COX18, COX20, SCO1 and SCO2. Interacts with TMEM177 in a COX20-dependent manner. Interacts with COX20. Interacts with COX16. The cofactor is Cu cation.

It is found in the mitochondrion inner membrane. It catalyses the reaction 4 Fe(II)-[cytochrome c] + O2 + 8 H(+)(in) = 4 Fe(III)-[cytochrome c] + 2 H2O + 4 H(+)(out). Functionally, component of the cytochrome c oxidase, the last enzyme in the mitochondrial electron transport chain which drives oxidative phosphorylation. The respiratory chain contains 3 multisubunit complexes succinate dehydrogenase (complex II, CII), ubiquinol-cytochrome c oxidoreductase (cytochrome b-c1 complex, complex III, CIII) and cytochrome c oxidase (complex IV, CIV), that cooperate to transfer electrons derived from NADH and succinate to molecular oxygen, creating an electrochemical gradient over the inner membrane that drives transmembrane transport and the ATP synthase. Cytochrome c oxidase is the component of the respiratory chain that catalyzes the reduction of oxygen to water. Electrons originating from reduced cytochrome c in the intermembrane space (IMS) are transferred via the dinuclear copper A center (CU(A)) of subunit 2 and heme A of subunit 1 to the active site in subunit 1, a binuclear center (BNC) formed by heme A3 and copper B (CU(B)). The BNC reduces molecular oxygen to 2 water molecules using 4 electrons from cytochrome c in the IMS and 4 protons from the mitochondrial matrix. The polypeptide is Cytochrome c oxidase subunit 2 (MT-CO2) (Bos indicus (Zebu)).